Reading from the N-terminus, the 304-residue chain is UDP-N-acetylenolpyruvoylglucosamine reductase (304 aa).

In terms of domain architecture, FAD-binding PCMH-type spans Met-33–Lys-212. Arg-176 is a catalytic residue. The active-site Proton donor is Ser-226. Glu-296 is an active-site residue.

It belongs to the MurB family. FAD serves as cofactor.

Its subcellular location is the cytoplasm. It carries out the reaction UDP-N-acetyl-alpha-D-muramate + NADP(+) = UDP-N-acetyl-3-O-(1-carboxyvinyl)-alpha-D-glucosamine + NADPH + H(+). It functions in the pathway cell wall biogenesis; peptidoglycan biosynthesis. Its function is as follows. Cell wall formation. This Exiguobacterium sibiricum (strain DSM 17290 / CCUG 55495 / CIP 109462 / JCM 13490 / 255-15) protein is UDP-N-acetylenolpyruvoylglucosamine reductase.